The chain runs to 1123 residues: Rabphilin-1 (1123 aa).

A compositionally biased stretch (basic residues) spans 1 to 17; that stretch reads MTKSTKLRHCKQKKKKP. Disordered stretches follow at residues 1 to 56 and 88 to 140; these read MTKS…GSRS and SAHN…PSTH. Positions 36–46 are enriched in low complexity; it reads DAATTTSTTDA. Residues 215–341 enclose the RabBD domain; the sequence is KAQTGSITAA…KKSGAWFYKE (127 aa). The FYVE-type zinc-finger motif lies at 263 to 328; sequence GNGVTHCLLC…LCKICSEARE (66 aa). Zn(2+) contacts are provided by Cys-269, Cys-272, Cys-288, Cys-291, Cys-296, Cys-300, Cys-320, and Cys-323. Polar residues-rich tracts occupy residues 365–375, 387–400, 410–428, and 487–497; these read PNASSAATPLS, TMPSTSSCQMTTPK, PGLQMNGGPTSPLPNGTRR, and ASSSDGESFVQ. 3 disordered regions span residues 365–710, 737–779, and 796–818; these read PNAS…VGSA, TSRA…LRTS, and HIVSSEPTSSTTSNQNHTSVPIP. Basic and acidic residues predominate over residues 531–541; it reads SRREANMERFS. The span at 563 to 574 shows a compositional bias: low complexity; that stretch reads ESRPSTRSTSPR. 2 stretches are compositionally biased toward polar residues: residues 605–632 and 649–666; these read VVQSDHSNPQQSGLTCSSSSLTPLQQQA and PDRTTSRVAQSASGTSLV. Positions 742-753 are enriched in low complexity; sequence SPLAASSSFLSS. A compositionally biased stretch (basic and acidic residues) spans 756–768; it reads DDTKQKNRRRDGV. The segment covering 803 to 818 has biased composition (low complexity); sequence TSSTTSNQNHTSVPIP. 2 consecutive C2 domains span residues 844–967 and 984–1103; these read SLGS…NLYL and DRGK…RQWI. Ca(2+)-binding residues include Asp-875, Asp-881, Asp-936, Asp-938, Asp-943, Asp-1015, Asp-1021, Asp-1075, Asp-1077, and Asp-1083.

It depends on Ca(2+) as a cofactor.

It is found in the synapse. Rab-3 effector. This chain is Rabphilin-1 (rbf-1), found in Caenorhabditis elegans.